The chain runs to 602 residues: Elongation factor 4 (602 aa).

The region spanning Lys-7 to Lys-189 is the tr-type G domain. GTP is bound by residues Asp-19 to Thr-24 and Asn-136 to Asp-139.

This sequence belongs to the TRAFAC class translation factor GTPase superfamily. Classic translation factor GTPase family. LepA subfamily.

The protein localises to the cell membrane. It carries out the reaction GTP + H2O = GDP + phosphate + H(+). Its function is as follows. Required for accurate and efficient protein synthesis under certain stress conditions. May act as a fidelity factor of the translation reaction, by catalyzing a one-codon backward translocation of tRNAs on improperly translocated ribosomes. Back-translocation proceeds from a post-translocation (POST) complex to a pre-translocation (PRE) complex, thus giving elongation factor G a second chance to translocate the tRNAs correctly. Binds to ribosomes in a GTP-dependent manner. The protein is Elongation factor 4 of Clostridium tetani (strain Massachusetts / E88).